The following is a 336-amino-acid chain: NADH-quinone oxidoreductase subunit H (336 aa).

The next 8 membrane-spanning stretches (helical) occupy residues 4-24 (YILW…LVVA), 75-95 (YLFF…WAVI), 108-128 (LGLL…VIAG), 154-174 (MGFA…TGII), 181-201 (LWHW…IAGI), 233-253 (LFFL…SIMF), 272-292 (FVPG…MFLW), and 308-328 (LGWK…ACMV).

Belongs to the complex I subunit 1 family. NDH-1 is composed of 14 different subunits. Subunits NuoA, H, J, K, L, M, N constitute the membrane sector of the complex.

It is found in the cell inner membrane. The catalysed reaction is a quinone + NADH + 5 H(+)(in) = a quinol + NAD(+) + 4 H(+)(out). In terms of biological role, NDH-1 shuttles electrons from NADH, via FMN and iron-sulfur (Fe-S) centers, to quinones in the respiratory chain. The immediate electron acceptor for the enzyme in this species is believed to be ubiquinone. Couples the redox reaction to proton translocation (for every two electrons transferred, four hydrogen ions are translocated across the cytoplasmic membrane), and thus conserves the redox energy in a proton gradient. This subunit may bind ubiquinone. This chain is NADH-quinone oxidoreductase subunit H, found in Francisella philomiragia subsp. philomiragia (strain ATCC 25017 / CCUG 19701 / FSC 153 / O#319-036).